Here is a 292-residue protein sequence, read N- to C-terminus: tRNA (adenine(9)-N1)-methyltransferase (292 aa).

The region spanning 72–253 (TFRKGGKKVS…ISLQSKSDKI (182 aa)) is the SAM-dependent MTase TRM10-type domain.

The protein belongs to the class IV-like SAM-binding methyltransferase superfamily. TRM10 family.

The protein localises to the cytoplasm. It catalyses the reaction adenosine(9) in tRNA + S-adenosyl-L-methionine = N(1)-methyladenosine(9) in tRNA + S-adenosyl-L-homocysteine + H(+). Functionally, catalyzes the S-adenosyl-L-methionine-dependent formation of N(1)-methyladenine at position 9 (m1A9) in tRNA. In Sulfolobus acidocaldarius (strain ATCC 33909 / DSM 639 / JCM 8929 / NBRC 15157 / NCIMB 11770), this protein is tRNA (adenine(9)-N1)-methyltransferase.